Consider the following 444-residue polypeptide: Bystin (444 aa).

Disordered stretches follow at residues 1–37 (MAKKRDRIVNTQPFISDDASVASSRKRSKVPKTHQKQ) and 53–85 (ALAQQKEVADEENAERNPSSAAFAVAGAATAGE). A compositionally biased stretch (basic residues) spans 24–34 (SRKRSKVPKTH). The segment covering 73-84 (AAFAVAGAATAG) has biased composition (low complexity).

Belongs to the bystin family. Component of the 40S pre-ribosome. In terms of tissue distribution, highly expressed in flowers and at lower levels in roots, hypocotyls, stems, leaves, siliques and seeds.

Its subcellular location is the nucleus. It is found in the nucleolus. It localises to the nucleoplasm. Its function is as follows. Essential protein required during embryogenesis and pollen development. Required for processing of 20S pre-rRNA precursor and biogenesis of 40S ribosomal subunits. This Arabidopsis thaliana (Mouse-ear cress) protein is Bystin.